Consider the following 862-residue polypeptide: Linoleate 9S-lipoxygenase 1 (862 aa).

In terms of domain architecture, PLAT spans 44 to 171 (FGAATDIVGG…SYKRDRIFFA (128 aa)). One can recognise a Lipoxygenase domain in the interval 174–862 (TYLPNETPAS…FRGIPNSISI (689 aa)). The disordered stretch occupies residues 225–257 (KNLARTTLGGSSDFPYPRRGRTGRKSTRKDPKC). Over residues 242–251 (RRGRTGRKST) the composition is skewed to basic residues. 5 residues coordinate Fe cation: histidine 522, histidine 527, histidine 713, asparagine 717, and isoleucine 862.

Belongs to the lipoxygenase family. In terms of assembly, monomer. Fe cation is required as a cofactor.

The protein localises to the cytoplasm. The catalysed reaction is (9Z,12Z)-octadecadienoate + O2 = (13S)-hydroperoxy-(9Z,11E)-octadecadienoate. The enzyme catalyses (9Z,12Z,15Z)-octadecatrienoate + O2 = (13S)-hydroperoxy-(9Z,11E,15Z)-octadecatrienoate. It carries out the reaction (9Z,12Z)-octadecadienoate + O2 = (9S)-hydroperoxy-(10E,12Z)-octadecadienoate. It functions in the pathway lipid metabolism; oxylipin biosynthesis. Functionally, plant lipoxygenase may be involved in a number of diverse aspects of plant physiology including growth and development, pest resistance, and senescence or responses to wounding. It catalyzes the hydroperoxidation of lipids containing a cis,cis-1,4-pentadiene structure. The sequence is that of Linoleate 9S-lipoxygenase 1 (LOXA) from Phaseolus vulgaris (Kidney bean).